Reading from the N-terminus, the 448-residue chain is UDP-N-acetylmuramoylalanine--D-glutamate ligase (448 aa).

112–118 (GSNAKST) is an ATP binding site.

Belongs to the MurCDEF family.

It localises to the cytoplasm. It catalyses the reaction UDP-N-acetyl-alpha-D-muramoyl-L-alanine + D-glutamate + ATP = UDP-N-acetyl-alpha-D-muramoyl-L-alanyl-D-glutamate + ADP + phosphate + H(+). The protein operates within cell wall biogenesis; peptidoglycan biosynthesis. In terms of biological role, cell wall formation. Catalyzes the addition of glutamate to the nucleotide precursor UDP-N-acetylmuramoyl-L-alanine (UMA). This Acinetobacter baumannii (strain AB307-0294) protein is UDP-N-acetylmuramoylalanine--D-glutamate ligase.